The primary structure comprises 243 residues: NAD-dependent protein deacetylase (243 aa).

The Deacetylase sirtuin-type domain maps to 1 to 243 (MKHDLETLKH…VSVVKSLMTE (243 aa)). NAD(+)-binding residues include Ala-24, Phe-35, Arg-36, Gln-105, Ile-107, Asp-108, and His-123. Phe-35 contacts nicotinamide. Residues Ile-107 and Asp-108 each contribute to the nicotinamide site. The active-site Proton acceptor is the His-123. 4 residues coordinate Zn(2+): Cys-131, Cys-134, Cys-151, and Cys-154. NAD(+)-binding residues include Ser-192, Ser-193, Asn-215, and Asp-232.

The protein belongs to the sirtuin family. Class U subfamily. Zn(2+) is required as a cofactor.

It is found in the cytoplasm. It carries out the reaction N(6)-acetyl-L-lysyl-[protein] + NAD(+) + H2O = 2''-O-acetyl-ADP-D-ribose + nicotinamide + L-lysyl-[protein]. In terms of biological role, NAD-dependent protein deacetylase which modulates the activities of several enzymes which are inactive in their acetylated form. This is NAD-dependent protein deacetylase from Staphylococcus aureus (strain MRSA252).